Reading from the N-terminus, the 613-residue chain is Pesticidal crystal-like protein Cry16Aa (613 aa).

The protein belongs to the delta endotoxin family.

It is found in the secreted. Functionally, toxin active on mosquito larvae of the species Aedes aegypti, Culex pipiens and Anopheles stephensi. This Paraclostridium bifermentans (Clostridium bifermentans) protein is Pesticidal crystal-like protein Cry16Aa (cry16Aa).